Consider the following 51-residue polypeptide: uncharacterized protein (51 aa).

A helical transmembrane segment spans residues 10 to 29 (LFLYHPLFLLLLYIYLVLFI).

The protein localises to the plastid. Its subcellular location is the chloroplast membrane. This is an uncharacterized protein from Anthoceros angustus (Hornwort).